Here is a 152-residue protein sequence, read N- to C-terminus: Protein Smg homolog (152 aa).

Belongs to the Smg family.

The sequence is that of Protein Smg homolog from Chromobacterium violaceum (strain ATCC 12472 / DSM 30191 / JCM 1249 / CCUG 213 / NBRC 12614 / NCIMB 9131 / NCTC 9757 / MK).